Reading from the N-terminus, the 724-residue chain is Ribosomal protein S6 kinase alpha-1 (724 aa).

Serine 54 is subject to Phosphoserine. The region spanning phenylalanine 62–tyrosine 310 is the Protein kinase 1 domain. ATP-binding positions include leucine 68–valine 76 and lysine 94. The Proton acceptor role is filled by aspartate 187. Residue serine 221 is modified to Phosphoserine; by PDPK1. Residue serine 296 is modified to Phosphoserine. Positions serine 311–glycine 380 constitute an AGC-kinase C-terminal domain. Threonine 348 carries the post-translational modification Phosphothreonine. A phosphoserine mark is found at serine 352, serine 358, and serine 369. A Protein kinase 2 domain is found at tyrosine 407–isoleucine 664. Residues isoleucine 413 to cysteine 421 and lysine 436 contribute to the ATP site. The active-site Proton acceptor is the aspartate 524. Threonine 562 carries the phosphothreonine modification. Position 721 is a phosphoserine (serine 721).

The protein belongs to the protein kinase superfamily. AGC Ser/Thr protein kinase family. S6 kinase subfamily. Forms a complex with either MAPK1/ERK2 or MAPK3/ERK1 in quiescent cells. Transiently dissociates following mitogenic stimulation. Interacts with ETV1/ER81 and FGFR1. Requires Mg(2+) as cofactor. In terms of processing, activated by phosphorylation at Ser-221 by PDPK1. Autophosphorylated on Ser-369, as part of the activation process. May be phosphorylated at Thr-348 and Ser-352 by MAPK1/ERK2 and MAPK3/ERK1. Post-translationally, N-terminal myristoylation results in an activated kinase in the absence of added growth factors. Intestine, thymus, and lung.

It is found in the nucleus. It localises to the cytoplasm. It carries out the reaction L-seryl-[protein] + ATP = O-phospho-L-seryl-[protein] + ADP + H(+). The enzyme catalyses L-threonyl-[protein] + ATP = O-phospho-L-threonyl-[protein] + ADP + H(+). Upon extracellular signal or mitogen stimulation, phosphorylated at Thr-562 in the C-terminal kinase domain (CTKD) by MAPK1/ERK2 and MAPK3/ERK1. The activated CTKD then autophosphorylates Ser-369, allowing binding of PDPK1, which in turn phosphorylates Ser-221 in the N-terminal kinase domain (NTDK) leading to the full activation of the protein and subsequent phosphorylation of the substrates by the NTKD. Its function is as follows. Serine/threonine-protein kinase that acts downstream of ERK (MAPK1/ERK2 and MAPK3/ERK1) signaling and mediates mitogenic and stress-induced activation of the transcription factors CREB1, ETV1/ER81 and NR4A1/NUR77, regulates translation through RPS6 and EIF4B phosphorylation, and mediates cellular proliferation, survival, and differentiation by modulating mTOR signaling and repressing pro-apoptotic function of BAD and DAPK1. In fibroblast, is required for EGF-stimulated phosphorylation of CREB1, which results in the subsequent transcriptional activation of several immediate-early genes. In response to mitogenic stimulation (EGF and PMA), phosphorylates and activates NR4A1/NUR77 and ETV1/ER81 transcription factors and the cofactor CREBBP. Upon insulin-derived signal, acts indirectly on the transcription regulation of several genes by phosphorylating GSK3B at 'Ser-9' and inhibiting its activity. Phosphorylates RPS6 in response to serum or EGF via an mTOR-independent mechanism and promotes translation initiation by facilitating assembly of the pre-initiation complex. In response to insulin, phosphorylates EIF4B, enhancing EIF4B affinity for the EIF3 complex and stimulating cap-dependent translation. Is involved in the mTOR nutrient-sensing pathway by directly phosphorylating TSC2 at 'Ser-1798', which potently inhibits TSC2 ability to suppress mTOR signaling, and mediates phosphorylation of RPTOR, which regulates mTORC1 activity and may promote rapamycin-sensitive signaling independently of the PI3K/AKT pathway. Also involved in feedback regulation of mTORC1 and mTORC2 by phosphorylating DEPTOR. Mediates cell survival by phosphorylating the pro-apoptotic proteins BAD and DAPK1 and suppressing their pro-apoptotic function. Promotes the survival of hepatic stellate cells by phosphorylating CEBPB in response to the hepatotoxin carbon tetrachloride (CCl4). Mediates induction of hepatocyte prolifration by TGFA through phosphorylation of CEBPB. Is involved in cell cycle regulation by phosphorylating the CDK inhibitor CDKN1B, which promotes CDKN1B association with 14-3-3 proteins and prevents its translocation to the nucleus and inhibition of G1 progression. Phosphorylates EPHA2 at 'Ser-897', the RPS6KA-EPHA2 signaling pathway controls cell migration. In response to mTORC1 activation, phosphorylates EIF4B at 'Ser-406' and 'Ser-422' which stimulates bicarbonate cotransporter SLC4A7 mRNA translation, increasing SLC4A7 protein abundance and function. This chain is Ribosomal protein S6 kinase alpha-1 (Rps6ka1), found in Mus musculus (Mouse).